A 490-amino-acid chain; its full sequence is ABC transporter ATP-binding protein ModF (490 aa).

ABC transporter domains follow at residues 4 to 235 (LQIL…AHSE) and 261 to 489 (IVLN…LTKI). Residues 36 to 43 (GSNGSGKS) and 293 to 300 (GPNGAGKS) contribute to the ATP site.

It belongs to the ABC transporter superfamily.

Its subcellular location is the cell inner membrane. In terms of biological role, probably not involved in the transport of molybdenum into the cell. This is ABC transporter ATP-binding protein ModF (modF) from Escherichia coli (strain K12).